Here is a 368-residue protein sequence, read N- to C-terminus: Caffeine synthase 3 (368 aa).

S-adenosyl-L-homocysteine is bound at residue tyrosine 23. Threonine 30 is a caffeine binding site. S-adenosyl-L-homocysteine contacts are provided by cysteine 65, asparagine 70, aspartate 102, leucine 103, serine 137, and phenylalanine 138. Positions 155, 158, and 159 each coordinate caffeine. A Mg(2+)-binding site is contributed by asparagine 176. Arginine 224 is a caffeine binding site. Mg(2+) is bound by residues aspartate 262, phenylalanine 264, and asparagine 265. Phenylalanine 320 is a binding site for caffeine.

Belongs to the methyltransferase superfamily. Type-7 methyltransferase family. Mg(2+) is required as a cofactor.

It carries out the reaction theobromine + S-adenosyl-L-methionine = caffeine + S-adenosyl-L-homocysteine + H(+). The catalysed reaction is 7-methylxanthine + S-adenosyl-L-methionine = theobromine + S-adenosyl-L-homocysteine + H(+). Its pathway is alkaloid biosynthesis. Functionally, involved in the biosynthesis of caffeine. Catalyzes the conversion of 7-methylxanthine (7mX) to theobromine and of theobromine to caffeine. The sequence is that of Caffeine synthase 3 from Camellia sinensis (Tea plant).